Here is a 155-residue protein sequence, read N- to C-terminus: 6,7-dimethyl-8-ribityllumazine synthase (155 aa).

Residues Phe-24, 58–60 (AFE), and 82–84 (VII) contribute to the 5-amino-6-(D-ribitylamino)uracil site. 87–88 (ST) lines the (2S)-2-hydroxy-3-oxobutyl phosphate pocket. His-90 acts as the Proton donor in catalysis. Residue Phe-115 coordinates 5-amino-6-(D-ribitylamino)uracil. A (2S)-2-hydroxy-3-oxobutyl phosphate-binding site is contributed by Arg-129.

It belongs to the DMRL synthase family.

The enzyme catalyses (2S)-2-hydroxy-3-oxobutyl phosphate + 5-amino-6-(D-ribitylamino)uracil = 6,7-dimethyl-8-(1-D-ribityl)lumazine + phosphate + 2 H2O + H(+). It functions in the pathway cofactor biosynthesis; riboflavin biosynthesis; riboflavin from 2-hydroxy-3-oxobutyl phosphate and 5-amino-6-(D-ribitylamino)uracil: step 1/2. Functionally, catalyzes the formation of 6,7-dimethyl-8-ribityllumazine by condensation of 5-amino-6-(D-ribitylamino)uracil with 3,4-dihydroxy-2-butanone 4-phosphate. This is the penultimate step in the biosynthesis of riboflavin. The chain is 6,7-dimethyl-8-ribityllumazine synthase from Pelodictyon phaeoclathratiforme (strain DSM 5477 / BU-1).